A 118-amino-acid chain; its full sequence is NAD(P)H-quinone oxidoreductase subunit M (118 aa).

The protein belongs to the complex I NdhM subunit family. NDH-1 can be composed of about 15 different subunits; different subcomplexes with different compositions have been identified which probably have different functions.

The protein resides in the cellular thylakoid membrane. The catalysed reaction is a plastoquinone + NADH + (n+1) H(+)(in) = a plastoquinol + NAD(+) + n H(+)(out). It catalyses the reaction a plastoquinone + NADPH + (n+1) H(+)(in) = a plastoquinol + NADP(+) + n H(+)(out). Functionally, NDH-1 shuttles electrons from an unknown electron donor, via FMN and iron-sulfur (Fe-S) centers, to quinones in the respiratory and/or the photosynthetic chain. The immediate electron acceptor for the enzyme in this species is believed to be plastoquinone. Couples the redox reaction to proton translocation, and thus conserves the redox energy in a proton gradient. Cyanobacterial NDH-1 also plays a role in inorganic carbon-concentration. This chain is NAD(P)H-quinone oxidoreductase subunit M, found in Trichormus variabilis (strain ATCC 29413 / PCC 7937) (Anabaena variabilis).